Reading from the N-terminus, the 517-residue chain is Nucleoside transporter FUN26 (517 aa).

Positions 1–63 are disordered; that stretch reads MSTSADTDTI…EREQSVSTEP (63 aa). Over residues 25–44 the composition is skewed to basic and acidic residues; the sequence is THSEEISRSGEEHESENNEH. Phosphoserine occurs at positions 45 and 58. Helical transmembrane passes span 76 to 96, 116 to 136, 151 to 171, 174 to 194, 214 to 234, 243 to 263, 344 to 364, 367 to 387, 411 to 431, 446 to 466, and 492 to 512; these read LSYITFFAIGIGLLWPWNCIL, IFTSSMMSFSTISSMLFNIYL, LVWEIIVFTVMCFFTILHFLL, WFNFMFIMMLVVISSMGTAMT, MVGQAVAGVLPSLVLFALAFI, GGILLYFFTTTLVVTICVVMF, LVLSIFTTFVVTLVFPVFASA, VTGLPLSNAQYIPLIFTLWNL, TFIYSLLRVAAIPLFLMFTAI, IVDLCYMLLQFLFGVTNGHVI, and IFVSTGLALGSIISYVFVFII.

It belongs to the SLC29A/ENT transporter (TC 2.A.57) family.

The protein localises to the membrane. In terms of biological role, has broad nucleoside selectivity (uridine, adenosine and cytidine) and most likely functions to transport nucleosides across intracellular membranes. In Saccharomyces cerevisiae (strain ATCC 204508 / S288c) (Baker's yeast), this protein is Nucleoside transporter FUN26 (FUN26).